The chain runs to 37 residues: MNQKEFQAVLDWMLSPTIIQFHEYNYMLQKSLPFLRR.

This sequence belongs to the phi29likevirus gp16.5 family.

The polypeptide is Gene product 16.5 (16.5) (Bacillus phage phi29 (Bacteriophage phi-29)).